The chain runs to 41 residues: uncharacterized protein (41 aa).

Positions 19 to 41 (NSTRNSSSSSRSSYSSRTTVFSL) are disordered.

This is an uncharacterized protein from Dictyostelium discoideum (Social amoeba).